A 313-amino-acid chain; its full sequence is ADP-L-glycero-D-manno-heptose-6-epimerase (313 aa).

Residues M10–I11, D31–N32, K38, R53, E75–S79, and N92 each bind NADP(+). Residue Y139 is the Proton acceptor of the active site. Residue K143 participates in NADP(+) binding. N174 contacts substrate. NADP(+) is bound by residues V175 and K183. K183 functions as the Proton acceptor in the catalytic mechanism. Residues S185, H192, F206–S209, R214, and Y277 contribute to the substrate site.

The protein belongs to the NAD(P)-dependent epimerase/dehydratase family. HldD subfamily. As to quaternary structure, homopentamer. NADP(+) is required as a cofactor.

It catalyses the reaction ADP-D-glycero-beta-D-manno-heptose = ADP-L-glycero-beta-D-manno-heptose. It functions in the pathway nucleotide-sugar biosynthesis; ADP-L-glycero-beta-D-manno-heptose biosynthesis; ADP-L-glycero-beta-D-manno-heptose from D-glycero-beta-D-manno-heptose 7-phosphate: step 4/4. Its pathway is bacterial outer membrane biogenesis; LPS core biosynthesis. Its function is as follows. Catalyzes the interconversion between ADP-D-glycero-beta-D-manno-heptose and ADP-L-glycero-beta-D-manno-heptose via an epimerization at carbon 6 of the heptose. In Vibrio parahaemolyticus serotype O3:K6 (strain RIMD 2210633), this protein is ADP-L-glycero-D-manno-heptose-6-epimerase.